The primary structure comprises 280 residues: Phosphatidylglycerol--prolipoprotein diacylglyceryl transferase (280 aa).

3 consecutive transmembrane segments (helical) span residues 21–41 (WYGI…ISEG), 54–74 (LLLW…VIFE), and 88–108 (IWNG…VLLI). Arginine 136 is an a 1,2-diacyl-sn-glycero-3-phospho-(1'-sn-glycerol) binding site. Transmembrane regions (helical) follow at residues 176-196 (QPTF…ILSL), 206-226 (GEVF…VEGM), and 236-256 (IIRV…ILWI).

This sequence belongs to the Lgt family.

Its subcellular location is the cell membrane. It carries out the reaction L-cysteinyl-[prolipoprotein] + a 1,2-diacyl-sn-glycero-3-phospho-(1'-sn-glycerol) = an S-1,2-diacyl-sn-glyceryl-L-cysteinyl-[prolipoprotein] + sn-glycerol 1-phosphate + H(+). Its pathway is protein modification; lipoprotein biosynthesis (diacylglyceryl transfer). In terms of biological role, catalyzes the transfer of the diacylglyceryl group from phosphatidylglycerol to the sulfhydryl group of the N-terminal cysteine of a prolipoprotein, the first step in the formation of mature lipoproteins. This chain is Phosphatidylglycerol--prolipoprotein diacylglyceryl transferase, found in Lactobacillus acidophilus (strain ATCC 700396 / NCK56 / N2 / NCFM).